A 426-amino-acid chain; its full sequence is MTQMDDAKNGIITEEMKIVAEKEKIDIEKLRKLIAKGYVVILKNVNRDTNPVGIGQSLRTKVNANIGTSPDCVDIELEIKKAKIAEKYGADAVMDLSTGGNLEEIRKAIMDAVKIPIGTVPIYEVGKLAREKYGRVIDMNEDLMFKVIEKQAKEGVDFMTLHCGITKQSVERLKRSGRIMGVVSRGGAFLTAYILYHNEENPLYKNFDYLLDILKEHDVTISLGDGMRPGCLADNTDRAQIEELITLGELVERCREKGVQCMVEGPGHIPINYIETNIRLQKSLCKNAPFYVLGPIVTDIAPGYDHITAAIGGALAGYYGADFLCYVTPSEHLRLPTIEDVKEGVIATKIAAQAADVAKGNKLAWEKETEMAYARKNHDWEKQFELAIDKEKARKMREEIPSKEEKACSICGDYCALLMVEELGKR.

Residues Asn-65, Met-94, Tyr-123, His-162, 184-186 (SRG), 225-228 (DGMR), and Glu-264 each bind substrate. His-268 serves as a coordination point for Zn(2+). A substrate-binding site is contributed by Tyr-291. Residue His-332 coordinates Zn(2+). Residues Cys-408, Cys-411, and Cys-415 each contribute to the [4Fe-4S] cluster site.

Belongs to the ThiC family. [4Fe-4S] cluster is required as a cofactor.

The catalysed reaction is 5-amino-1-(5-phospho-beta-D-ribosyl)imidazole + S-adenosyl-L-methionine = 4-amino-2-methyl-5-(phosphooxymethyl)pyrimidine + CO + 5'-deoxyadenosine + formate + L-methionine + 3 H(+). Its pathway is cofactor biosynthesis; thiamine diphosphate biosynthesis. Functionally, catalyzes the synthesis of the hydroxymethylpyrimidine phosphate (HMP-P) moiety of thiamine from aminoimidazole ribotide (AIR) in a radical S-adenosyl-L-methionine (SAM)-dependent reaction. The chain is Phosphomethylpyrimidine synthase from Methanocaldococcus jannaschii (strain ATCC 43067 / DSM 2661 / JAL-1 / JCM 10045 / NBRC 100440) (Methanococcus jannaschii).